Consider the following 482-residue polypeptide: MVTTAEKTNIGYITQIIGPVVDVKFPSGKLPQIYNALTIKGTNEAGQELNLTVEVQQLLGDNQIRAVAMSSTDGLVRGLEVVDTGAPISVPVGKATLGRIFNVLGEPVDNRGPVNNQETLPIHRPAPKLTELETKPSVFETGIKVVDLLTPYRRGGKIGLFGGAGVGKTVIMMELINNIATQHGGVSVFAGVGERTREGNDLYNEMIESGVINKDNLNESKIALVYGQMNEPPGARMRVGLSGLTMAEYFRDVNKQDVLLFIDNIFRFVQAGSEVSALLGRMPSAVGYQPTLGTDVGQLQERITSTTEGSITSIQAVYVPADDLTDPAPATTFAHLDGTTVLSRGLAAKGIYPAVDPLGSTSTMLQPNIVGDEHYNTARAVQSTLQRYKELQDIIAILGLDELSEEDRLIVARARKVERFLSQPFFVAEVFTGSPGKYVKLEDTIKGFQKILSGELDDLPEQAFYLVGDINEAIAKAEKLKG.

ATP is bound at residue 162–169; sequence GGAGVGKT.

It belongs to the ATPase alpha/beta chains family. In terms of assembly, F-type ATPases have 2 components, CF(1) - the catalytic core - and CF(0) - the membrane proton channel. CF(1) has five subunits: alpha(3), beta(3), gamma(1), delta(1), epsilon(1). CF(0) has four main subunits: a(1), b(1), b'(1) and c(9-12).

It localises to the cellular thylakoid membrane. The enzyme catalyses ATP + H2O + 4 H(+)(in) = ADP + phosphate + 5 H(+)(out). Its function is as follows. Produces ATP from ADP in the presence of a proton gradient across the membrane. The catalytic sites are hosted primarily by the beta subunits. The sequence is that of ATP synthase subunit beta from Trichormus variabilis (strain ATCC 29413 / PCC 7937) (Anabaena variabilis).